The sequence spans 152 residues: MSSKLEQLQALLAPVVEALGYECWGVEFISQGRHSVLRVYIDRPEGILIDDCEAVSRQVSGILDVEDPISGEYTLEVSSPGMDRPLFTLEQFAKHAGEQVKIRLRSPYEGRRNYQGILRGVEEQDVVVLVDDHEYLLPIDSIDKANIIPRFD.

It belongs to the RimP family.

It localises to the cytoplasm. In terms of biological role, required for maturation of 30S ribosomal subunits. This chain is Ribosome maturation factor RimP, found in Pseudomonas aeruginosa (strain LESB58).